The following is a 154-amino-acid chain: 6,7-dimethyl-8-ribityllumazine synthase (154 aa).

5-amino-6-(D-ribitylamino)uracil is bound by residues F22, 56 to 58 (SFE), and 81 to 83 (VLI). (2S)-2-hydroxy-3-oxobutyl phosphate is bound at residue 86 to 87 (ET). Residue H89 is the Proton donor of the active site. F114 serves as a coordination point for 5-amino-6-(D-ribitylamino)uracil. R128 serves as a coordination point for (2S)-2-hydroxy-3-oxobutyl phosphate.

The protein belongs to the DMRL synthase family.

The catalysed reaction is (2S)-2-hydroxy-3-oxobutyl phosphate + 5-amino-6-(D-ribitylamino)uracil = 6,7-dimethyl-8-(1-D-ribityl)lumazine + phosphate + 2 H2O + H(+). It functions in the pathway cofactor biosynthesis; riboflavin biosynthesis; riboflavin from 2-hydroxy-3-oxobutyl phosphate and 5-amino-6-(D-ribitylamino)uracil: step 1/2. Catalyzes the formation of 6,7-dimethyl-8-ribityllumazine by condensation of 5-amino-6-(D-ribitylamino)uracil with 3,4-dihydroxy-2-butanone 4-phosphate. This is the penultimate step in the biosynthesis of riboflavin. The chain is 6,7-dimethyl-8-ribityllumazine synthase from Chlamydia felis (strain Fe/C-56) (Chlamydophila felis).